A 397-amino-acid chain; its full sequence is Cephalotocin receptor 1 (397 aa).

The Extracellular portion of the chain corresponds to 1 to 48 (MRYITTHPNEISTQIWNNFSSTEIWSNFSAAKNETQPIRRNQDLANAE). N18, N27, and N33 each carry an N-linked (GlcNAc...) asparagine glycan. A helical membrane pass occupies residues 49-69 (VITLAVVIIITVIGNSIVLIT). Over 70–91 (LFQRRKKLTRMHLFILHLSVTD) the chain is Cytoplasmic. Residues 92-112 (LFVAFFNNLPQMIWDITFLFL) form a helical membrane-spanning segment. The Extracellular portion of the chain corresponds to 113-120 (GTDLLCRL). A disulfide bridge connects residues C118 and C194. Residues 121–141 (VTYLQSVAMYASSYVLVATAI) traverse the membrane as a helical segment. Residues 142 to 162 (DRYFAICHPLSSHKWTTARVH) are Cytoplasmic-facing. The chain crosses the membrane as a helical span at residues 163 to 183 (VMVFIAWMLSFLFSTPQLFIW). Residues 184-205 (SMQFSNIGLTCQATFDPEWTLK) are Extracellular-facing. The helical transmembrane segment at 206–226 (FYITWLTVAIWILPTIALTLF) threads the bilayer. The Cytoplasmic portion of the chain corresponds to 227–293 (YGMMCFAVWK…RGISRAKVRS (67 aa)). The chain crosses the membrane as a helical span at residues 294-314 (VALTLSVVACCFICWSPFFVC). Residues 315-331 (QMWAAWDENAPYSGAIY) are Extracellular-facing. Residues 332–352 (TILLLLSSLNSCTNPWIYMIF) traverse the membrane as a helical segment. The Cytoplasmic portion of the chain corresponds to 353–397 (SVFQHRAKTSRFVNDEETTSVTVLSSRNDIRLMSMKKKLEQTARN).

It belongs to the G-protein coupled receptor 1 family. Vasopressin/oxytocin receptor subfamily. As to expression, present in brain, buccal ganglion, gastric ganglion, olfactory lube, peduncle lobe, optical lobe, pancreas, the oviduct and the ovary.

It localises to the cell membrane. In terms of biological role, acts as a receptor for cephalotocin. The chain is Cephalotocin receptor 1 from Octopus vulgaris (Common octopus).